The following is a 970-amino-acid chain: Sodium/calcium exchanger 1 (970 aa).

Positions 1–32 (MLRLSLSPTYSLGFHLLAMMTLLISHVDHITA) are cleaved as a signal peptide. At 33-71 (ETEMVEEGNETGECTGSYYCKKGVILPIWEPQDPSFGDK) the chain is on the extracellular side. An N-linked (GlcNAc...) asparagine glycan is attached at N41. Residues 72-92 (IARATVYFVAMVYMFLGVSII) traverse the membrane as a helical segment. The Cytoplasmic segment spans residues 93 to 133 (ADRFMSSIEVITSQEKEITIKKPNGETTKTTVRIWNETVSN). A helical transmembrane segment spans residues 134 to 154 (LTLMALGSSAPEILLSVIEVC). An Alpha-1 repeat occupies 138 to 178 (ALGSSAPEILLSVIEVCGHNFTAGDLGPSTIVGSAAFNMFI). Over 155–167 (GHNFTAGDLGPST) the chain is Extracellular. Residue N157 is glycosylated (N-linked (GlcNAc...) asparagine). A helical transmembrane segment spans residues 168–188 (IVGSAAFNMFIIIALCVYVVP). Topologically, residues 189–201 (DGETRKIKHLRVF) are cytoplasmic. The chain crosses the membrane as a helical span at residues 202–222 (FVTAAWSIFAYTWLYIILSVI). At 223–228 (SPGVVE) the chain is on the extracellular side. Residues 229–249 (VWEGLLTFFFFPICVVFAWVA) traverse the membrane as a helical segment. Residues 250–797 (DRRLLFYKYV…FVPPTEYWNG (548 aa)) are Cytoplasmic-facing. Residues 251–270 (RRLLFYKYVYKRYRAGKQRG) form a putative calmodulin-binding region region. A phosphoserine mark is found at S282 and S389. Calx-beta domains lie at 393 to 493 (VNTE…VHLS) and 524 to 624 (ATVT…LEIG). Ca(2+) is bound by residues E417, D453, D478, D479, I481, E483, E486, D530, D531, D532, E548, D584, D610, E611, E612, and E715. The helical transmembrane segment at 798 to 818 (WACFIVSILMIGLLTAFIGDL) threads the bilayer. The Extracellular segment spans residues 819 to 821 (ASH). Residues 822–842 (FGCTIGLKDSVTAVVFVALGT) traverse the membrane as a helical segment. An Alpha-2 repeat occupies 839-875 (ALGTSVPDTFASKVAATQDQYADASIGNVTGSNAVNV). Topologically, residues 843–871 (SVPDTFASKVAATQDQYADASIGNVTGSN) are cytoplasmic. The helical transmembrane segment at 872–892 (AVNVFLGIGVAWSIAAIYHAA) threads the bilayer. Residues 893 to 903 (NGEQFKVSPGT) are Extracellular-facing. Residues 904-924 (LAFSVTLFTIFAFINVGVLLY) traverse the membrane as a helical segment. Residues 925–941 (RRRPEIGGELGGPRTAK) lie on the Cytoplasmic side of the membrane. A helical transmembrane segment spans residues 942–962 (LLTSCLFVLLWLLYIFFSSLE). Residues 963-970 (AYCHIKGF) are Extracellular-facing.

It belongs to the Ca(2+):cation antiporter (CaCA) (TC 2.A.19) family. SLC8 subfamily.

It localises to the cell membrane. The catalysed reaction is Ca(2+)(in) + 3 Na(+)(out) = Ca(2+)(out) + 3 Na(+)(in). Its activity is regulated as follows. Activated by micromolar levels of Ca(2+). Its function is as follows. Mediates the exchange of one Ca(2+) ion against three to four Na(+) ions across the cell membrane, and thereby contributes to the regulation of cytoplasmic Ca(2+) levels and Ca(2+)-dependent cellular processes. Contributes to Ca(2+) transport during excitation-contraction coupling in muscle. In a first phase, voltage-gated channels mediate the rapid increase of cytoplasmic Ca(2+) levels due to release of Ca(2+) stores from the endoplasmic reticulum. SLC8A1 mediates the export of Ca(2+) from the cell during the next phase, so that cytoplasmic Ca(2+) levels rapidly return to baseline. Required for normal embryonic heart development and the onset of heart contractions. This is Sodium/calcium exchanger 1 (SLC8A1) from Cavia porcellus (Guinea pig).